The following is a 229-amino-acid chain: Germin-like protein subfamily 1 member 7 (229 aa).

The first 24 residues, 1–24 (MEGFLRFLVAKAILLALASSFVSC), serve as a signal peptide directing secretion. A disulfide bridge connects residues Cys34 and Cys50. Residues 64–215 (SGLNIAGNTI…AFQLDVNVVK (152 aa)) enclose the Cupin type-1 domain. Asn79 carries an N-linked (GlcNAc...) asparagine glycan. 4 residues coordinate Mn(2+): His112, His114, Glu119, and His161.

The protein belongs to the germin family. Oligomer (believed to be a pentamer but probably hexamer).

The protein localises to the secreted. It is found in the extracellular space. The protein resides in the apoplast. May play a role in plant defense. Probably has no oxalate oxidase activity even if the active site is conserved. This Arabidopsis thaliana (Mouse-ear cress) protein is Germin-like protein subfamily 1 member 7.